The chain runs to 437 residues: Triacylglycerol lipase (437 aa).

A PE domain is found at 1-100; that stretch reads MVSYVVALPE…AELANASLLQ (100 aa). Positions 101–206 are linker; the sequence is SEFASGIGNG…GNSPPPLLNS (106 aa). The segment at 207–437 is lipase; that stretch reads LLGQTVQYTT…QINQQLGIAA (231 aa). The short motif at 239 to 241 is the Involved in the stabilization of the negatively charged intermediate by the formation of the oxyanion hole element; it reads HGG. Residues serine 309, aspartate 383, and histidine 413 contribute to the active site.

The protein in the N-terminal section; belongs to the mycobacterial PE family. PGRS subfamily. In the C-terminal section; belongs to the 'GDXG' lipolytic enzyme family. Forms aggregates via its PE domain. Upon export, the PE domain is removed by proteolytic cleavage. Cleavage occurs at the cell surface and is not required for secretion. Cleaved after Gly-149 by the aspartic protease PecA. May also be cleaved before Leu-98 and after Ala-136.

The protein localises to the cytoplasm. It localises to the secreted. Its subcellular location is the cell wall. It is found in the cell surface. It catalyses the reaction a triacylglycerol + H2O = a diacylglycerol + a fatty acid + H(+). The catalysed reaction is 1,2,3-tri-(9Z-octadecenoyl)-glycerol + H2O = di-(9Z)-octadecenoylglycerol + (9Z)-octadecenoate + H(+). It carries out the reaction an acetyl ester + H2O = an aliphatic alcohol + acetate + H(+). The enzyme catalyses a butanoate ester + H2O = an aliphatic alcohol + butanoate + H(+). It catalyses the reaction a hexanoate ester + H2O = an aliphatic alcohol + hexanoate + H(+). The catalysed reaction is an octanoate ester + H2O = an aliphatic alcohol + octanoate + H(+). It carries out the reaction a dodecanoate ester + H2O = an aliphatic alcohol + dodecanoate + H(+). The enzyme catalyses a tetradecanoate ester + H2O = an aliphatic alcohol + tetradecanoate + H(+). It catalyses the reaction hexadecanoate ester + H2O = an aliphatic alcohol + hexadecanoate + H(+). The catalysed reaction is octadecanoate ester + H2O = an aliphatic alcohol + octadecanoate + H(+). It carries out the reaction 1-butyrylglycerol + H2O = butanoate + glycerol + H(+). The enzyme catalyses 1,2,3-tributanoylglycerol + H2O = dibutanoylglycerol + butanoate + H(+). Its activity is regulated as follows. PE domain down-regulates lipase activity. With respect to regulation, cleavage by PecA does not affect surface localization and lipase activity. Inhibited by diethyl-p-nitrophenyl phosphate (E-600) at 0.5 uM, by phenylmethanesulfonyl fluoride at 5 mM and by polyethylene glycol sorbitan monolaurate (Tween 20). Also inhibited by CaCl(2), CoCl(2), MnCl(2), ZnCl(2) and MgCl(2). Inhibited by several hydrazides compounds. Stimulated slightly by SDS at concentrations up to 2 mM, above which the activity is severely inhibited. In terms of biological role, catalyzes the hydrolysis of both intracellular and extracellular triacylglycerol (TAG). In vitro, can also hydrolyze p-nitrophenyl (pNP) esters with various chain lengths, including pNP-acetate (C2), pNP-butyrate (C4), pNP-caproate (C6), pNP-caprylate (C8), pNP-laurate (C12), pNP-myristate (C14), pNP-palmitate (C16) and pNP-stearate (C18). Also hydrolyzes monobutyrin, tributyrin and trioctanoin. Overexpression results in increase of virulence characterized by reduced survival of infected mouse and increased burden of bacilli in the lungs. Hydrolyzes internal or host-derived TAG depending on its localization. Functionally, hydrolyzes TAG that accumulates within mycobacterial intracytosolic lipid inclusions (ILI). Probably responsible for the utilization of stored long-chain TAG during the dormancy and reactivation stages of the pathogen. Its function is as follows. Hydrolyzes host-derived TAG. The polypeptide is Triacylglycerol lipase (Mycobacterium tuberculosis (strain ATCC 25618 / H37Rv)).